Reading from the N-terminus, the 160-residue chain is Small ribosomal subunit protein uS9 (160 aa).

The span at 1–18 shows a compositional bias: polar residues; it reads MTDTSNSLQDLGTLTGAP. The interval 1 to 37 is disordered; it reads MTDTSNSLQDLGTLTGAPSAQPVKSVEPKIDAQGRAY.

Belongs to the universal ribosomal protein uS9 family.

The protein is Small ribosomal subunit protein uS9 of Hyphomonas neptunium (strain ATCC 15444).